Reading from the N-terminus, the 818-residue chain is MSFLNSSRRRTRSPSPGQIFAPSATPIVIDSSPSVPSASSILDSLLGEFSEARDPYTVEAGPTGRSSDHLFSSPGVLTQSPGRENVPPRPSERTKDAHGKDRFLVSTERNGRSPFRGNPYRSAEIHSPKGRLKAPTKEGGTRKTKKFSSSNRTLTGRSTKFLAKTASKPTQSSKVPSEIPAAKLDSLQWEDGELRLELATTRRGSWTPIKDTSIDIVDPTRNLSPSNVSAAGSQKFSSMLSDYGFTKGSTLTMENELRREVPTTKRRLELLQGTANDIFSEGDFSRPPEKSVVNPNGTHSRRSRKTTSTTITSLSTAQYGHQDSRQMSNLADFFPSGEAVERPSGAIKKLKTSKSGTKKKGVKKAKEAPLFKVASIEDALKSLEDQVCLFGTSSQLERVSSDEEPQMANFNLNAQFPRKNSRPQKTRSPCSNPKTSKSLWYASSRGYDDIEFVDMIDSSNPKTLESVEASTFVTPIDSSPMHSQVASQMVFENPCDVSHVLTKIPQTGPKDPIENPVCPEIQIRHSGNVKTQSTSGQSIPSFRGLTTAQLAQKVASFGFKPLRSREKMISLLEKCWESQQQTHIPAMLPASHTALPDSVTRAEQMSKRDTIKSRDIRASKSRSNSNHIPGLVSSTSQNTGYAAKSPDCIRGSSKSNDIGTTQGSPLLTTQSVIVIPDSDDSDNDNNPTGGAYSYPSLASNTPSSSTRTMASESLLSVRTRYEANVGEEQGSNDINQQITKAIRAQPRLVAINGVKRPTWLEKILMYDPIVLDDLTVWLNTEGLDQIGEDSEVSGTTVREWCESKGICCTWKKKRHVAP.

5 disordered regions span residues 1–39 (MSFL…PSAS), 53–151 (RDPY…SSSN), 279–324 (FSEG…HQDS), 413–437 (NAQF…KTSK), and 587–712 (MLPA…MASE). The segment covering 28–39 (VIDSSPSVPSAS) has biased composition (low complexity). Over residues 90-103 (PSERTKDAHGKDRF) the composition is skewed to basic and acidic residues. A compositionally biased stretch (low complexity) spans 306–316 (TTSTTITSLST). A compositionally biased stretch (polar residues) spans 426-437 (TRSPCSNPKTSK). Positions 604–618 (QMSKRDTIKSRDIRA) are enriched in basic and acidic residues. 3 stretches are compositionally biased toward polar residues: residues 621-640 (SRSN…QNTG), 652-672 (SSKS…TQSV), and 696-712 (SLAS…MASE).

The protein belongs to the SLX4 family. As to quaternary structure, forms a heterodimer with SLX1. Post-translationally, phosphorylated in response to DNA damage.

The protein resides in the nucleus. Regulatory subunit of the SLX1-SLX4 structure-specific endonuclease that resolves DNA secondary structures generated during DNA repair and recombination. Has endonuclease activity towards branched DNA substrates, introducing single-strand cuts in duplex DNA close to junctions with ss-DNA. This chain is Structure-specific endonuclease subunit SLX4, found in Uncinocarpus reesii (strain UAMH 1704).